The primary structure comprises 331 residues: Syntaxin-43 (331 aa).

At 1-305 the chain is on the cytoplasmic side; it reads MATRNRTLLF…KAERTQRQGG (305 aa). Disordered regions lie at residues 20 to 45 and 59 to 80; these read VRAPMGSSSSSTLTEHNSLTGAKSGL and PNRSYAPVSTEDPGNSSRGTIT. Polar residues predominate over residues 31 to 40; that stretch reads TLTEHNSLTG. Residues 124–154 adopt a coiled-coil conformation; the sequence is KEDQHQIETLTQEVTFLLKKSEKQLQRLSAA. The t-SNARE coiled-coil homology domain occupies 235 to 297; it reads EEISIEREKE…DDGLKQLQKA (63 aa). Residues 306–326 form a helical; Anchor for type IV membrane protein membrane-spanning segment; sequence MVMCASVLVILCFIMLVLLIL. The Vesicular segment spans residues 327-331; sequence KEILL.

Belongs to the syntaxin family. In terms of assembly, part of the t-SNARE complex. In terms of tissue distribution, expressed at low levels in roots, stems, flowers and leaves.

The protein localises to the golgi apparatus. Its subcellular location is the trans-Golgi network membrane. Contributes to the regulation of secretory and vacuolar transport pathways in the post-Golgi network, and to the maintenance of the Golgi apparatus and trans-Golgi network (TGN) morphologies. Vesicle trafficking protein that functions in the secretory pathway and mediates liposome fusion. Required for extracellular resistance responses to a fungal pathogen. Also involved in the protection of chloroplasts from salicylic acid-dependent biotic stress. This Arabidopsis thaliana (Mouse-ear cress) protein is Syntaxin-43.